A 576-amino-acid chain; its full sequence is Rho GTPase-activating protein gacP (576 aa).

The stretch at 123-189 (LKSIIKTELK…RTNFERVGID (67 aa)) forms a coiled coil. The Rho-GAP domain maps to 277–462 (EDLSVLLNRE…TIIQNFDRIF (186 aa)). The disordered stretch occupies residues 472–576 (VPDTYVPPPN…DEGDAVELSD (105 aa)). Residues 482–500 (NTRNNSVNNFNNVQPSSFS) are compositionally biased toward low complexity. Residues 501-513 (ASTSRSINLNKST) are compositionally biased toward polar residues. The span at 514–530 (NNPNINDDNNNNNNINN) shows a compositional bias: low complexity. Acidic residues predominate over residues 565–576 (SFDEGDAVELSD).

It localises to the cytoplasm. Functionally, rho GTPase-activating protein involved in the signal transduction pathway. The polypeptide is Rho GTPase-activating protein gacP (gacP) (Dictyostelium discoideum (Social amoeba)).